The chain runs to 194 residues: Ras-related protein Rab-22A (194 aa).

GTP is bound at residue 12–20 (GDTGVGKSS). An Effector region motif is present at residues 34–42 (INPTIGASF). Residues 60–64 (DTAGQ), 118–121 (NKCD), and 148–150 (SAK) each bind GTP. The segment at 170–194 (DANPPSGGKGFKLRRQPSEPQRSCC) is disordered. Residues cysteine 193 and cysteine 194 are each lipidated (S-geranylgeranyl cysteine).

It belongs to the small GTPase superfamily. Rab family. As to quaternary structure, interacts directly with ZFYVE20. Interacts (in its GTP-bound form) with RINL and RABGEF1. Binds EEA1.

The protein resides in the endosome membrane. It localises to the cell membrane. The protein localises to the early endosome. It is found in the late endosome. Its subcellular location is the cell projection. The protein resides in the ruffle. It localises to the cytoplasmic vesicle. The protein localises to the phagosome. It is found in the phagosome membrane. Functionally, plays a role in endocytosis and intracellular protein transport. Mediates trafficking of TF from early endosomes to recycling endosomes. Required for NGF-mediated endocytosis of NTRK1, and subsequent neurite outgrowth. Binds GTP and GDP and has low GTPase activity. Alternates between a GTP-bound active form and a GDP-bound inactive form. The sequence is that of Ras-related protein Rab-22A (RAB22A) from Canis lupus familiaris (Dog).